Here is a 138-residue protein sequence, read N- to C-terminus: Nucleoside diphosphate kinase (138 aa).

ATP is bound by residues Lys9, Phe57, Arg85, Thr91, Arg102, and Asn112. Catalysis depends on His120, which acts as the Pros-phosphohistidine intermediate.

It belongs to the NDK family. In terms of assembly, homotetramer. Mg(2+) is required as a cofactor.

It localises to the cytoplasm. It carries out the reaction a 2'-deoxyribonucleoside 5'-diphosphate + ATP = a 2'-deoxyribonucleoside 5'-triphosphate + ADP. It catalyses the reaction a ribonucleoside 5'-diphosphate + ATP = a ribonucleoside 5'-triphosphate + ADP. Its function is as follows. Major role in the synthesis of nucleoside triphosphates other than ATP. The ATP gamma phosphate is transferred to the NDP beta phosphate via a ping-pong mechanism, using a phosphorylated active-site intermediate. This is Nucleoside diphosphate kinase from Streptococcus agalactiae serotype V (strain ATCC BAA-611 / 2603 V/R).